We begin with the raw amino-acid sequence, 359 residues long: Guanine nucleotide-binding protein G(o) subunit alpha (359 aa).

The disordered stretch occupies residues 1-26 (MGGCVSATPEEREAKTRSSVIDRQQR). Residue glycine 2 is the site of N-myristoyl glycine attachment. A lipid anchor (S-palmitoyl cysteine) is attached at cysteine 4. The region spanning 34-359 (NTIKILLLGA…RENLEAANLL (326 aa)) is the G-alpha domain. The interval 37-50 (KILLLGAGESGKST) is G1 motif. Residues 42 to 49 (GAGESGKS), 178 to 184 (LRSRVQT), 203 to 207 (DVGGQ), 272 to 275 (NKAD), and alanine 331 each bind GTP. The Mg(2+) site is built by serine 49 and threonine 184. Residues 176–184 (DVLRSRVQT) form a G2 motif region. The interval 199-208 (YRVVDVGGQR) is G3 motif. A G4 motif region spans residues 268 to 275 (ILFLNKAD). Residues 329–334 (TTATDT) form a G5 motif region.

It belongs to the G-alpha family. G(i/o/t/z) subfamily. G proteins are composed of 3 units; alpha, beta and gamma. The alpha chain contains the guanine nucleotide binding site.

Guanine nucleotide-binding proteins (G proteins) are involved as modulators or transducers in various transmembrane signaling systems. The G(o) protein function is not clear. This Geodia cydonium (Sponge) protein is Guanine nucleotide-binding protein G(o) subunit alpha.